Reading from the N-terminus, the 154-residue chain is Egg-lysin (154 aa).

A signal peptide spans 1–18 (MKLFVLCIFAMMATLAMS).

As to quaternary structure, homodimer. Sperm.

In terms of biological role, dissolves the egg vitelline layer nonenzymatically during fertilization. It creates a hole of about 3 mu-m in diameter through which the sperm pass. This is Egg-lysin from Haliotis kamtschatkana (Pinto abalone).